The primary structure comprises 92 residues: UPF0223 protein SPy_1248/M5005_Spy0958 (92 aa).

It belongs to the UPF0223 family.

In Streptococcus pyogenes serotype M1, this protein is UPF0223 protein SPy_1248/M5005_Spy0958.